Reading from the N-terminus, the 480-residue chain is MILKLHNTRTKDFSELTNFDNVKVYACGPTVYNYAHIGNFRTYIFGDLLIKTLRFLGYKVNYAMNITDIGHLTGDLDDGEDKVVKTAREKGLTVQEISEFFTEAFFKDCRKLNVVYPDKVLIASKHIPIMIEVVKILEEKKITYFSNGNVYFDTSCFKSYGEMAGIDLIDKDMTFSRVDIDKFKRNKTDFVLWFTNSKFKDQEMKWDSPWGFGYPSWHLECAAMNLEYFKDTLDIHLGGVDHIGVHHINEIAIVECFLNKKWCDIFVHGEFLIMDYNKMSKSRGNFITVKDLEEQNFSPLDFRYLCLTSHYRNQLKFSLNNLQASKIARENMINRLSYFYASLDPVALGVLNKDLKNFGFSEEKEYYDSFIEKVSFDLNISQGLALLWEIIKSENLSFVSKLRLAFIFDEIMSLNLREEILKNLENHDVVVDENMKTLIEERRIAKCEKNFKRADEIRDFFAKKGFVLVDTKEGTKVKRG.

Cys-27 is a binding site for Zn(2+). The short motif at 29-39 (PTVYNYAHIGN) is the 'HIGH' region element. Positions 221, 246, and 250 each coordinate Zn(2+). The 'KMSKS' region signature appears at 278–282 (KMSKS). Lys-281 contacts ATP.

The protein belongs to the class-I aminoacyl-tRNA synthetase family. As to quaternary structure, monomer. The cofactor is Zn(2+).

It localises to the cytoplasm. It catalyses the reaction tRNA(Cys) + L-cysteine + ATP = L-cysteinyl-tRNA(Cys) + AMP + diphosphate. The protein is Cysteine--tRNA ligase of Borreliella afzelii (strain PKo) (Borrelia afzelii).